The following is a 172-amino-acid chain: Trypsin inhibitor DE-3 (172 aa).

Cystine bridges form between Cys39-Cys83 and Cys132-Cys139.

The protein belongs to the protease inhibitor I3 (leguminous Kunitz-type inhibitor) family.

Its function is as follows. Inhibition of trypsin. The chain is Trypsin inhibitor DE-3 from Erythrina variegata (Indian coral tree).